Consider the following 200-residue polypeptide: Recombination protein RecR (200 aa).

Residues 58–75 (CSTCFCLKNLPESNCEFC) form a C4-type zinc finger. The Toprim domain maps to 82-177 (STLCIVATPK…SISRLALGLP (96 aa)).

This sequence belongs to the RecR family.

Functionally, may play a role in DNA repair. It seems to be involved in an RecBC-independent recombinational process of DNA repair. It may act with RecF and RecO. The polypeptide is Recombination protein RecR (Chlamydia caviae (strain ATCC VR-813 / DSM 19441 / 03DC25 / GPIC) (Chlamydophila caviae)).